The sequence spans 302 residues: Lipoyl synthase (302 aa).

Residues C54, C59, C65, C80, C84, C87, and S291 each coordinate [4Fe-4S] cluster. The Radical SAM core domain maps to 66–280 (WSRKTATYML…RIYGKSIGFK (215 aa)).

It belongs to the radical SAM superfamily. Lipoyl synthase family. It depends on [4Fe-4S] cluster as a cofactor.

The protein resides in the cytoplasm. The catalysed reaction is [[Fe-S] cluster scaffold protein carrying a second [4Fe-4S](2+) cluster] + N(6)-octanoyl-L-lysyl-[protein] + 2 oxidized [2Fe-2S]-[ferredoxin] + 2 S-adenosyl-L-methionine + 4 H(+) = [[Fe-S] cluster scaffold protein] + N(6)-[(R)-dihydrolipoyl]-L-lysyl-[protein] + 4 Fe(3+) + 2 hydrogen sulfide + 2 5'-deoxyadenosine + 2 L-methionine + 2 reduced [2Fe-2S]-[ferredoxin]. The protein operates within protein modification; protein lipoylation via endogenous pathway; protein N(6)-(lipoyl)lysine from octanoyl-[acyl-carrier-protein]: step 2/2. Catalyzes the radical-mediated insertion of two sulfur atoms into the C-6 and C-8 positions of the octanoyl moiety bound to the lipoyl domains of lipoate-dependent enzymes, thereby converting the octanoylated domains into lipoylated derivatives. This chain is Lipoyl synthase, found in Leptospira borgpetersenii serovar Hardjo-bovis (strain JB197).